Here is a 403-residue protein sequence, read N- to C-terminus: 4-hydroxy-3-methylbut-2-en-1-yl diphosphate synthase (ferredoxin) (403 aa).

Residues Cys312, Cys315, Cys346, and Glu353 each coordinate [4Fe-4S] cluster.

This sequence belongs to the IspG family. It depends on [4Fe-4S] cluster as a cofactor.

It carries out the reaction (2E)-4-hydroxy-3-methylbut-2-enyl diphosphate + 2 oxidized [2Fe-2S]-[ferredoxin] + H2O = 2-C-methyl-D-erythritol 2,4-cyclic diphosphate + 2 reduced [2Fe-2S]-[ferredoxin] + H(+). It participates in isoprenoid biosynthesis; isopentenyl diphosphate biosynthesis via DXP pathway; isopentenyl diphosphate from 1-deoxy-D-xylulose 5-phosphate: step 5/6. In terms of biological role, converts 2C-methyl-D-erythritol 2,4-cyclodiphosphate (ME-2,4cPP) into 1-hydroxy-2-methyl-2-(E)-butenyl 4-diphosphate. The polypeptide is 4-hydroxy-3-methylbut-2-en-1-yl diphosphate synthase (ferredoxin) (Synechocystis sp. (strain ATCC 27184 / PCC 6803 / Kazusa)).